We begin with the raw amino-acid sequence, 326 residues long: Putative ribose-phosphate pyrophosphokinase 2 (326 aa).

Residues 43–45 (DGE) and 102–103 (RQ) contribute to the ATP site. Histidine 136 contributes to the Mg(2+) binding site. D-ribose 5-phosphate is bound by residues aspartate 225 and 229-233 (NTGKT).

It belongs to the ribose-phosphate pyrophosphokinase family. Class I subfamily. As to quaternary structure, homohexamer. Mg(2+) serves as cofactor.

Its subcellular location is the cytoplasm. It catalyses the reaction D-ribose 5-phosphate + ATP = 5-phospho-alpha-D-ribose 1-diphosphate + AMP + H(+). It participates in metabolic intermediate biosynthesis; 5-phospho-alpha-D-ribose 1-diphosphate biosynthesis; 5-phospho-alpha-D-ribose 1-diphosphate from D-ribose 5-phosphate (route I): step 1/1. Its function is as follows. Involved in the biosynthesis of the central metabolite phospho-alpha-D-ribosyl-1-pyrophosphate (PRPP) via the transfer of pyrophosphoryl group from ATP to 1-hydroxyl of ribose-5-phosphate (Rib-5-P). The protein is Putative ribose-phosphate pyrophosphokinase 2 of Streptococcus pyogenes serotype M18 (strain MGAS8232).